A 631-amino-acid polypeptide reads, in one-letter code: Probable G-protein coupled receptor 153 (631 aa).

Residues 1-11 are Extracellular-facing; sequence MSDERRLPSSA. Residues 12 to 32 form a helical membrane-spanning segment; it reads VGWLACGGLSLLANAWGILSV. The Cytoplasmic portion of the chain corresponds to 33–41; sequence GAKQKKWKP. Residues 42–62 traverse the membrane as a helical segment; the sequence is LEFLLCTLAATHMLNVAVPIA. Topologically, residues 63–84 are extracellular; sequence TYAVVQLRRQRPDYEWNEGLCK. Residues 85–105 traverse the membrane as a helical segment; sequence VFVSTFYTLTLATCFSVTSIS. Residues 106 to 126 lie on the Cytoplasmic side of the membrane; that stretch reads YHRMWMVRWPVNYRLSNAKKQ. The chain crosses the membrane as a helical span at residues 127–147; it reads AVHTVMGIWMVSFILSALPAV. The Extracellular segment spans residues 148 to 162; sequence GWHDTSERFYTHGCR. Residues 163–183 traverse the membrane as a helical segment; the sequence is FIVAEIGLGFGVCFLLLVGGS. Residues 184–243 are Cytoplasmic-facing; the sequence is VAMGMVCTAIALFQTLATQVGHRADRRTFTVPTIVVEDAQGKRRSSIDGSEPARTSLQIT. A helical transmembrane segment spans residues 244–264; sequence GLVATIVVIYDCLMGFPVLVV. The Extracellular segment spans residues 265 to 276; the sequence is SFSSLRADASAP. Residues 277-297 traverse the membrane as a helical segment; sequence WMALCVLWCSVTQALLLPLFL. Topologically, residues 298-631 are cytoplasmic; sequence WTCDRYRADL…LHSDSLGSAS (334 aa). Disordered regions lie at residues 486–518, 546–590, and 603–631; these read LQPS…RSAS, QPFP…SLSA, and CGSI…GSAS. The span at 605 to 617 shows a compositional bias: low complexity; it reads SISSFLSSPSESS.

This sequence belongs to the G-protein coupled receptor 1 family.

Its subcellular location is the cell membrane. Orphan receptor. This is Probable G-protein coupled receptor 153 (Gpr153) from Mus musculus (Mouse).